We begin with the raw amino-acid sequence, 513 residues long: Mannan endo-1,4-beta-mannosidase A and B (513 aa).

The first 26 residues, 1–26, serve as a signal peptide directing secretion; that stretch reads MKVYKKVAFVMAFIMFFSVLPTISMS. The region spanning 41-353 is the GH26 domain; that stretch reads QTTKNVYSWL…FNDSWVVNRG (313 aa). His-132 contributes to the substrate binding site. Catalysis depends on Glu-195, which acts as the Proton donor. Residues Trp-200 and Tyr-270 each coordinate substrate. The active-site Nucleophile is the Glu-295. A substrate-binding site is contributed by 429-430; the sequence is IK.

This sequence belongs to the glycosyl hydrolase 26 family.

It localises to the secreted. The catalysed reaction is Random hydrolysis of (1-&gt;4)-beta-D-mannosidic linkages in mannans, galactomannans and glucomannans.. Functionally, could be involved in the degradation of glucomannan and catalyzes the endo hydrolysis of beta-1,4-linked mannan, galactomannan and glucomannan. This chain is Mannan endo-1,4-beta-mannosidase A and B, found in Caldalkalibacillus mannanilyticus (strain DSM 16130 / CIP 109019 / JCM 10596 / AM-001) (Bacillus mannanilyticus).